A 272-amino-acid chain; its full sequence is GPN-loop GTPase 3 (272 aa).

A GTP-binding site is contributed by G13–T18. Positions G70–N72 match the Gly-Pro-Asn (GPN)-loop; involved in dimer interface motif. S173–D176 provides a ligand contact to GTP.

This sequence belongs to the GPN-loop GTPase family. Heterodimers with NPA3/GPN1 or GPN2. Binds to RNA polymerase II (RNAPII).

Its function is as follows. Small GTPase required for proper nuclear localization of RNA polymerase II and III (RNAPII and RNAPIII). May act at an RNAP assembly step prior to nuclear import. Promotes sister chromatid separation during anaphase. This chain is GPN-loop GTPase 3, found in Saccharomyces cerevisiae (strain ATCC 204508 / S288c) (Baker's yeast).